The sequence spans 338 residues: GTPase Obg (338 aa).

In terms of domain architecture, Obg spans 1-159 (MQFIDEVKIH…RWLRLELKLL (159 aa)). The OBG-type G domain maps to 160–331 (ADVGLLGFPN…LLDEIARSLW (172 aa)). Residues 166-173 (GFPNVGKS), 191-195 (FTTLK), 213-216 (DIPG), 283-286 (NKMD), and 312-314 (SAA) contribute to the GTP site. Ser-173 and Thr-193 together coordinate Mg(2+).

The protein belongs to the TRAFAC class OBG-HflX-like GTPase superfamily. OBG GTPase family. As to quaternary structure, monomer. Mg(2+) serves as cofactor.

The protein resides in the cytoplasm. In terms of biological role, an essential GTPase which binds GTP, GDP and possibly (p)ppGpp with moderate affinity, with high nucleotide exchange rates and a fairly low GTP hydrolysis rate. Plays a role in control of the cell cycle, stress response, ribosome biogenesis and in those bacteria that undergo differentiation, in morphogenesis control. This chain is GTPase Obg, found in Geobacter sulfurreducens (strain ATCC 51573 / DSM 12127 / PCA).